Reading from the N-terminus, the 669-residue chain is Collagen alpha-1(II) chain (669 aa).

2 positions are modified to 4-hydroxyproline: Pro3 and Pro12. Residues 318 to 327 (XXXXXXXGAP) show a composition bias toward low complexity. Disordered stretches follow at residues 318–360 (XXXX…XXXX), 405–438 (XXXX…XXXX), and 638–669 (XXGF…AGPR). A 4-hydroxyproline mark is found at Pro336 and Pro345. 2 stretches are compositionally biased toward low complexity: residues 339–360 (AGFA…XXXX) and 405–420 (XXXX…NGNP). Pro413 bears the 3-hydroxyproline mark. A 4-hydroxyproline mark is found at Pro414, Pro420, and Pro426. Low complexity-rich tracts occupy residues 429-438 (AGKXXXXXXX) and 638-647 (XXGFTGLQGL). Pro648 bears the 4-hydroxyproline mark. 3-hydroxyproline is present on Pro650.

Belongs to the fibrillar collagen family. In terms of assembly, homotrimers of alpha 1(II) chains. In terms of processing, contains mostly 4-hydroxyproline. Prolines at the third position of the tripeptide repeating unit (G-X-P) are 4-hydroxylated in some or all of the chains. Contains 3-hydroxyproline at a few sites. This modification occurs on the first proline residue in the sequence motif Gly-Pro-Hyp, where Hyp is 4-hydroxyproline.

The protein localises to the secreted. Its subcellular location is the extracellular space. The protein resides in the extracellular matrix. Its function is as follows. Type II collagen is specific for cartilaginous tissues. It is essential for the normal embryonic development of the skeleton, for linear growth and for the ability of cartilage to resist compressive forces. This Mammut americanum (American mastodon) protein is Collagen alpha-1(II) chain.